Consider the following 92-residue polypeptide: uncharacterized protein (92 aa).

A run of 2 helical transmembrane segments spans residues 34-54 and 65-85; these read GLGI…FMFG and LLYI…ASTV.

Its subcellular location is the cell membrane. This is an uncharacterized protein from Bacillus anthracis.